Here is a 675-residue protein sequence, read N- to C-terminus: Zinc finger protein 526 (675 aa).

C2H2-type zinc fingers lie at residues 56 to 78 (FMCS…QEQH), 108 to 130 (FQCG…QDAH), and 140 to 163 (YQCG…KTQH). A disordered region spans residues 160–195 (KTQHLSSAADEPPSPLPPPTPPPPPPPPPPPPPPEV). Pro residues predominate over residues 171–194 (PPSPLPPPTPPPPPPPPPPPPPPE). Residues 200-222 (YECPECSTLCATPEEFLEHQGTH) form a C2H2-type 4 zinc finger. The span at 225–234 (SLEKEEHNGL) shows a compositional bias: basic and acidic residues. The interval 225–283 (SLEKEEHNGLEEEEEDEEEGEEEEDDDDEETDEEEASSELTADDTGSNKSTADSAQSCG) is disordered. Acidic residues predominate over residues 235 to 261 (EEEEEDEEEGEEEEDDDDEETDEEEAS). Residues 269–281 (TGSNKSTADSAQS) show a composition bias toward polar residues. C2H2-type zinc fingers lie at residues 312–334 (FHCS…GRAH), 339–361 (HECT…QRLH), 367–389 (YLCV…RRAH), and 395–416 (HRCR…RRTH). The interval 415–439 (THTGKSGTPTRVATVSPAPAEPTPP) is disordered. Residues 418-427 (GKSGTPTRVA) are compositionally biased toward polar residues. C2H2-type zinc fingers lie at residues 447-470 (LPCP…RAVH), 477-499 (HRCG…LRTH), 505-527 (FQCH…QLTH), 533-555 (YQCL…RRLH), and 578-600 (YYCG…QRVH). Residues 606 to 625 (LTLQPPRSPSPVPPPPPEPQ) form a disordered region. Over residues 611 to 624 (PRSPSPVPPPPPEP) the composition is skewed to pro residues.

The protein belongs to the krueppel C2H2-type zinc-finger protein family.

The protein localises to the nucleus. May be involved in transcriptional regulation. The protein is Zinc finger protein 526 (Znf526) of Mus musculus (Mouse).